We begin with the raw amino-acid sequence, 279 residues long: Fatty acid elongase 2 (279 aa).

A run of 7 helical transmembrane segments spans residues 16-36 (LMLE…ALVW), 61-81 (AIIV…IVVV), 112-132 (FWIG…MFLL), 138-158 (PPFL…HTYC), 164-184 (MVLF…YFAM), 196-216 (FAPF…LVTT), and 242-262 (MGVI…LNSY). Residues 142–146 (HWYHH) carry the HxxHH motif motif. The active-site Nucleophile is His-145.

This sequence belongs to the ELO family.

Its subcellular location is the endoplasmic reticulum membrane. The enzyme catalyses an acyl-CoA + malonyl-CoA + H(+) = a 3-oxoacyl-CoA + CO2 + CoA. Its pathway is lipid metabolism; fatty acid biosynthesis. Involved in the synthesis of fatty acids. Elongates C10 fatty acids to C14. Required for the maintenance of the global lipidome profile in this parasite. The protein is Fatty acid elongase 2 of Trypanosoma cruzi (strain CL Brener).